Consider the following 252-residue polypeptide: Hydrolase phiM (252 aa).

The active-site Charge relay system is Ser126.

The protein belongs to the LovG family.

It participates in secondary metabolite biosynthesis. In terms of biological role, hydrolase; part of the gene cluster that mediates the biosynthesis of the antihypercholesterolemic agents phomoidrides which are dimeric anhydrides. Within the pathway, phiM releases the C12-fatty acyl chain from phiA. The pathway begins with the highly reducing polyketide synthase tstA that catalyzes the formation of a C12-fatty acyl-ACP, starting from one acetate and 5 malonate units. The hydrolase tstM is involved in the release of the C12-fatty acyl chain from phiA. The alkylcitrate synthase (ACS) tstJ and the alkylcitrate dehydratase (ACDH) tstI then give rise to decarboxylated monomeric anhydrides by coupling the C12-fatty acyl chain with oxalacetic acid. The cyclase tstC is responsible for the dimerization of the monomeric anhydrides which leads to the production of prephomoidride that contains the characteristic bicyclo[4.3.1]deca-1,6-diene system of phomoidrides. Iterative oxidation catalyzed by the alpha-ketoglutarate-dependent dioxygenase tstK produced then phomoidride A. Finally, the methyltransferase tstE converts phomoidride A to phomoidride B via an acetalization reaction. The phosphatidylethanolamine-binding protein tstB and tstN are not essential for dimerization and their functions have still to be determined. The polypeptide is Hydrolase phiM (Talaromyces stipitatus (strain ATCC 10500 / CBS 375.48 / QM 6759 / NRRL 1006) (Penicillium stipitatum)).